Consider the following 244-residue polypeptide: NH(3)-dependent NAD(+) synthetase (244 aa).

An ATP-binding site is contributed by 29 to 36 (GISGGIDS). Asp35 contributes to the Mg(2+) binding site. Arg113 contacts deamido-NAD(+). Residue Thr133 participates in ATP binding. Glu138 is a binding site for Mg(2+). Lys146 and Asp153 together coordinate deamido-NAD(+). ATP is bound by residues Lys162 and Thr184. A deamido-NAD(+)-binding site is contributed by 230-231 (HK).

It belongs to the NAD synthetase family. Homodimer.

It catalyses the reaction deamido-NAD(+) + NH4(+) + ATP = AMP + diphosphate + NAD(+) + H(+). Its pathway is cofactor biosynthesis; NAD(+) biosynthesis; NAD(+) from deamido-NAD(+) (ammonia route): step 1/1. Its function is as follows. Catalyzes the ATP-dependent amidation of deamido-NAD to form NAD. Uses ammonia as a nitrogen source. The sequence is that of NH(3)-dependent NAD(+) synthetase from Mesoplasma florum (strain ATCC 33453 / NBRC 100688 / NCTC 11704 / L1) (Acholeplasma florum).